Reading from the N-terminus, the 95-residue chain is Alpha-bungarotoxin, isoform A31 (95 aa).

The N-terminal stretch at 1-21 (MKTLLLTLVVVTIVCLDLGYT) is a signal peptide. Intrachain disulfides connect Cys-24-Cys-44, Cys-37-Cys-65, Cys-50-Cys-54, Cys-69-Cys-80, and Cys-81-Cys-86.

This sequence belongs to the three-finger toxin family. Long-chain subfamily. Type II alpha-neurotoxin sub-subfamily. Monomer in solution, homodimer in crystal state. Expressed by the venom gland.

The protein resides in the secreted. Binds with high affinity to muscular (tested on Torpedo marmorata, Kd=0.4 nM) and neuronal (tested on chimeric alpha-7/CHRNA7, Kd=0.95 nM) nicotinic acetylcholine receptor (nAChR) and inhibits acetylcholine from binding to the receptor, thereby impairing neuromuscular and neuronal transmission. It also shows an activity on GABA(A) receptors. It antagonises GABA-activated currents with high potency when tested on primary hippocampal neurons. It inhibits recombinantly expressed GABA(A) receptors composed of alpha-2-beta-2-gamma-2 (GABRA2-GABRB2-GABRG2) subunits with high potency (62.3% inhibition at 20 uM of toxin). It also shows a weaker inhibition on GABA(A) receptors composed of alpha-1-beta-2-gamma-2 (GABRA1-GABRB2-GABRG2) subunits, alpha-4-beta-2-gamma-2 (GABRA4-GABRB2-GABRG2) subunits, and alpha-5-beta-2-gamma-2 (GABRA5-GABRB2-GABRG2) subunits. A very weak inhibition is also observed on GABA(A) receptor composed of alpha-1-beta-3-gamma-2 (GABRA1-GABRB3-GABRG2). It has also been shown to bind and inhibit recombinant GABA(A) receptor beta-3/GABRB3 subunit (Kd=about 50 nM). In addition, it blocks the extracellular increase of dopamine evoked by nicotine only at the higher dose (4.2 uM). In vivo, when intraperitoneally injected into mice, induces flaccid paralysis of the limbs and respiratory distress, and causes death in a dose-dependent manner. In Bungarus candidus (Malayan krait), this protein is Alpha-bungarotoxin, isoform A31.